We begin with the raw amino-acid sequence, 394 residues long: Acetate kinase (394 aa).

Position 7 (Asn7) interacts with Mg(2+). Position 14 (Lys14) interacts with ATP. Arg90 serves as a coordination point for substrate. Asp147 functions as the Proton donor/acceptor in the catalytic mechanism. Residues 204-208 (HLGNG), 278-280 (DLR), and 326-330 (GIGEN) contribute to the ATP site. Glu380 lines the Mg(2+) pocket.

This sequence belongs to the acetokinase family. As to quaternary structure, homodimer. Mg(2+) serves as cofactor. It depends on Mn(2+) as a cofactor.

It localises to the cytoplasm. It catalyses the reaction acetate + ATP = acetyl phosphate + ADP. It participates in metabolic intermediate biosynthesis; acetyl-CoA biosynthesis; acetyl-CoA from acetate: step 1/2. Functionally, catalyzes the formation of acetyl phosphate from acetate and ATP. Can also catalyze the reverse reaction. The chain is Acetate kinase from Flavobacterium johnsoniae (strain ATCC 17061 / DSM 2064 / JCM 8514 / BCRC 14874 / CCUG 350202 / NBRC 14942 / NCIMB 11054 / UW101) (Cytophaga johnsonae).